An 84-amino-acid chain; its full sequence is U8-theraphotoxin-Hhn1a (84 aa).

The N-terminal stretch at 1 to 21 (MKVVLLECLVWMMAMMELVSC) is a signal peptide. Disulfide bonds link Cys-23/Cys-35, Cys-29/Cys-44, Cys-34/Cys-67, Cys-54/Cys-75, and Cys-69/Cys-81.

The protein belongs to the AVIT (prokineticin) family. In terms of tissue distribution, expressed by the venom gland.

It localises to the secreted. The sequence is that of U8-theraphotoxin-Hhn1a from Cyriopagopus hainanus (Chinese bird spider).